Consider the following 150-residue polypeptide: Transcriptional regulator MraZ (150 aa).

2 consecutive SpoVT-AbrB domains span residues Gln-9–Glu-54 and Ala-83–Thr-126.

This sequence belongs to the MraZ family. In terms of assembly, forms oligomers.

The protein resides in the cytoplasm. It is found in the nucleoid. This is Transcriptional regulator MraZ from Syntrophobacter fumaroxidans (strain DSM 10017 / MPOB).